Consider the following 283-residue polypeptide: D-alanine aminotransferase (283 aa).

Tyr32 serves as a coordination point for substrate. Arg51 provides a ligand contact to pyridoxal 5'-phosphate. 2 residues coordinate substrate: Arg99 and His101. Lys146 serves as the catalytic Proton acceptor. Lys146 is subject to N6-(pyridoxal phosphate)lysine. Residue Glu178 coordinates pyridoxal 5'-phosphate.

It belongs to the class-IV pyridoxal-phosphate-dependent aminotransferase family. In terms of assembly, homodimer. It depends on pyridoxal 5'-phosphate as a cofactor.

It carries out the reaction D-alanine + 2-oxoglutarate = D-glutamate + pyruvate. Functionally, acts on the D-isomers of alanine, leucine, aspartate, glutamate, aminobutyrate, norvaline and asparagine. The enzyme transfers an amino group from a substrate D-amino acid to the pyridoxal phosphate cofactor to form pyridoxamine and an alpha-keto acid in the first half-reaction. The second half-reaction is the reverse of the first, transferring the amino group from the pyridoxamine to a second alpha-keto acid to form the product D-amino acid via a ping-pong mechanism. This is an important process in the formation of D-alanine and D-glutamate, which are essential bacterial cell wall components. The chain is D-alanine aminotransferase (dat) from Lysinibacillus sphaericus (Bacillus sphaericus).